A 62-amino-acid chain; its full sequence is Photosystem II reaction center protein Z (62 aa).

2 consecutive transmembrane segments (helical) span residues 8–28 and 41–61; these read AVFA…VVFA and FSGT…NSLI.

Belongs to the PsbZ family. As to quaternary structure, PSII is composed of 1 copy each of membrane proteins PsbA, PsbB, PsbC, PsbD, PsbE, PsbF, PsbH, PsbI, PsbJ, PsbK, PsbL, PsbM, PsbT, PsbY, PsbZ, Psb30/Ycf12, at least 3 peripheral proteins of the oxygen-evolving complex and a large number of cofactors. It forms dimeric complexes.

The protein localises to the plastid. The protein resides in the chloroplast thylakoid membrane. In terms of biological role, may control the interaction of photosystem II (PSII) cores with the light-harvesting antenna, regulates electron flow through the 2 photosystem reaction centers. PSII is a light-driven water plastoquinone oxidoreductase, using light energy to abstract electrons from H(2)O, generating a proton gradient subsequently used for ATP formation. The protein is Photosystem II reaction center protein Z of Jasminum nudiflorum (Winter jasmine).